A 559-amino-acid chain; its full sequence is Leucine-rich repeat-containing protein 71 (559 aa).

Over residues 1–18 (MSSEQSAPGASPRAPRPG) the composition is skewed to low complexity. Residues 1-56 (MSSEQSAPGASPRAPRPGTQKSSGAVTKKGERAAKEKPATVLPPVGEEEPKSPEEY) are disordered. The span at 28-38 (KKGERAAKEKP) shows a compositional bias: basic and acidic residues. LRR repeat units follow at residues 172–193 (NLWK…LPLC), 196–216 (TLRK…HKLM), 221–241 (TIAH…QLLG), 253–266 (TLVS…HIGD), and 281–302 (SLLW…KLAE). Composition is skewed to basic and acidic residues over residues 324 to 348 (KGTQ…REKS) and 380 to 391 (KSWELAKKEEKL). The disordered stretch occupies residues 324–427 (KGTQERSRSP…PEQKPSRAKG (104 aa)).

This is Leucine-rich repeat-containing protein 71 (LRRC71) from Homo sapiens (Human).